A 220-amino-acid polypeptide reads, in one-letter code: Large ribosomal subunit protein uL3 (220 aa).

Residues 61–81 form a disordered region; it reads KGSKSNKYANKPAEGHAKKAD.

Belongs to the universal ribosomal protein uL3 family. Part of the 50S ribosomal subunit. Forms a cluster with proteins L14 and L19.

In terms of biological role, one of the primary rRNA binding proteins, it binds directly near the 3'-end of the 23S rRNA, where it nucleates assembly of the 50S subunit. The chain is Large ribosomal subunit protein uL3 from Staphylococcus epidermidis (strain ATCC 35984 / DSM 28319 / BCRC 17069 / CCUG 31568 / BM 3577 / RP62A).